A 258-amino-acid polypeptide reads, in one-letter code: Type III pantothenate kinase (258 aa).

6–13 is an ATP binding site; sequence DVGNTNTV. Substrate contacts are provided by residues Tyr100 and 107-110; that span reads GADR. Asp109 acts as the Proton acceptor in catalysis. Asp129 contributes to the K(+) binding site. Thr132 serves as a coordination point for ATP. Thr184 is a binding site for substrate.

It belongs to the type III pantothenate kinase family. As to quaternary structure, homodimer. NH4(+) is required as a cofactor. It depends on K(+) as a cofactor.

The protein resides in the cytoplasm. The enzyme catalyses (R)-pantothenate + ATP = (R)-4'-phosphopantothenate + ADP + H(+). Its pathway is cofactor biosynthesis; coenzyme A biosynthesis; CoA from (R)-pantothenate: step 1/5. In terms of biological role, catalyzes the phosphorylation of pantothenate (Pan), the first step in CoA biosynthesis. The polypeptide is Type III pantothenate kinase (Bacillus velezensis (strain DSM 23117 / BGSC 10A6 / LMG 26770 / FZB42) (Bacillus amyloliquefaciens subsp. plantarum)).